The sequence spans 311 residues: Meteorin-like protein (311 aa).

A signal peptide spans 1–45; sequence MRGAVWAARRRAGQQWPRSPGPGPGPPPPPPLLLLLLLLLGGASA. C52 and C75 are oxidised to a cystine. The N-linked (GlcNAc...) asparagine glycan is linked to N103. Disulfide bonds link C107-C143, C188-C260, C191-C284, and C201-C306.

The protein belongs to the meteorin family. Post-translationally, N-glycosylated. In terms of tissue distribution, highly expressed in subcutaneous adipose tissue.

It localises to the secreted. Functionally, hormone induced following exercise or cold exposure that promotes energy expenditure. Induced either in the skeletal muscle after exercise or in adipose tissue following cold exposure and is present in the circulation. Able to stimulate energy expenditure associated with the browning of the white fat depots and improves glucose tolerance. Does not promote an increase in a thermogenic gene program via direct action on adipocytes, but acts by stimulating several immune cell subtypes to enter the adipose tissue and activate their prothermogenic actions. Stimulates an eosinophil-dependent increase in IL4 expression and promotes alternative activation of adipose tissue macrophages, which are required for the increased expression of the thermogenic and anti-inflammatory gene programs in fat. Required for some cold-induced thermogenic responses, suggesting a role in metabolic adaptations to cold temperatures. The polypeptide is Meteorin-like protein (Metrnl) (Mus musculus (Mouse)).